Here is a 310-residue protein sequence, read N- to C-terminus: Apolipoprotein E (310 aa).

Positions 1–18 (MKVLWAALVVTLLAGCQA) are cleaved as a signal peptide. 8 tandem repeats follow at residues 77-98 (VLIE…QQLG), 99-120 (PMAQ…ARLG), 121-142 (ADME…AMMG), 143-164 (QSTE…KRLL), 165-186 (RDAE…EGAE), 187-204 (RSVN…EQAA), 205-226 (TVRS…QRLR), and 227-248 (GRLE…EQVQ). Residues 77–248 (VLIEETMKEV…RLDEVREQVQ (172 aa)) form an 8 X 22 AA approximate tandem repeats region. M140 bears the Methionine sulfoxide mark. S144 carries the post-translational modification Phosphoserine. The interval 155–165 (HLRKLRKRLLR) is LDL and other lipoprotein receptors binding. Heparin is bound at residue 159–162 (LRKR). Residues 203-283 (AATVRSLVSK…SWFEPLVQDM (81 aa)) form a lipid-binding and lipoprotein association region. A heparin-binding site is contributed by 222-229 (GQRLRGRL). Positions 259-310 (NQMRLQAEAFHARLKSWFEPLVQDMQQRWAELVEKVQLAVGTSPTSESSEKQ) are homooligomerization. The tract at residues 271 to 283 (RLKSWFEPLVQDM) is specificity for association with VLDL.

The protein belongs to the apolipoprotein A1/A4/E family. As to quaternary structure, homotetramer. May interact with ABCA1; functionally associated with ABCA1 in the biogenesis of HDLs. May interact with APP/A4 amyloid-beta peptide; the interaction is extremely stable in vitro but its physiological significance is unclear. May interact with MAPT. May interact with MAP2. In the cerebrospinal fluid, interacts with secreted SORL1. Interacts with PMEL; this allows the loading of PMEL luminal fragment on ILVs to induce fibril nucleation. Post-translationally, APOE exists as multiple glycosylated and sialylated glycoforms within cells and in plasma. The extent of glycosylation and sialylation are tissue and context specific. In terms of processing, glycated in plasma VLDL. Phosphorylated by FAM20C in the extracellular medium.

Its subcellular location is the secreted. It is found in the extracellular space. It localises to the extracellular matrix. The protein localises to the extracellular vesicle. The protein resides in the endosome. Its subcellular location is the multivesicular body. APOE is an apolipoprotein, a protein associating with lipid particles, that mainly functions in lipoprotein-mediated lipid transport between organs via the plasma and interstitial fluids. APOE is a core component of plasma lipoproteins and is involved in their production, conversion and clearance. Apolipoproteins are amphipathic molecules that interact both with lipids of the lipoprotein particle core and the aqueous environment of the plasma. As such, APOE associates with chylomicrons, chylomicron remnants, very low density lipoproteins (VLDL) and intermediate density lipoproteins (IDL) but shows a preferential binding to high-density lipoproteins (HDL). It also binds a wide range of cellular receptors including the LDL receptor/LDLR, the LDL receptor-related proteins LRP1, LRP2 and LRP8 and the very low-density lipoprotein receptor/VLDLR that mediate the cellular uptake of the APOE-containing lipoprotein particles. Finally, APOE also has a heparin-binding activity and binds heparan-sulfate proteoglycans on the surface of cells, a property that supports the capture and the receptor-mediated uptake of APOE-containing lipoproteins by cells. A main function of APOE is to mediate lipoprotein clearance through the uptake of chylomicrons, VLDLs, and HDLs by hepatocytes. APOE is also involved in the biosynthesis by the liver of VLDLs as well as their uptake by peripheral tissues ensuring the delivery of triglycerides and energy storage in muscle, heart and adipose tissues. By participating in the lipoprotein-mediated distribution of lipids among tissues, APOE plays a critical role in plasma and tissues lipid homeostasis. APOE is also involved in two steps of reverse cholesterol transport, the HDLs-mediated transport of cholesterol from peripheral tissues to the liver, and thereby plays an important role in cholesterol homeostasis. First, it is functionally associated with ABCA1 in the biogenesis of HDLs in tissues. Second, it is enriched in circulating HDLs and mediates their uptake by hepatocytes. APOE also plays an important role in lipid transport in the central nervous system, regulating neuron survival and sprouting. The sequence is that of Apolipoprotein E (APOE) from Tapirus indicus (Asiatic tapir).